We begin with the raw amino-acid sequence, 505 residues long: Zealexin A1 synthase (505 aa).

The chain crosses the membrane as a helical span at residues 7 to 26 (IAVGTVAVVAVLSKLKSAVT). Cysteine 442 provides a ligand contact to heme.

The protein belongs to the cytochrome P450 family. Heme serves as cofactor.

It is found in the membrane. It carries out the reaction (S)-beta-macrocarpene + 3 reduced [NADPH--hemoprotein reductase] + 3 O2 = zealexin A1 + 3 oxidized [NADPH--hemoprotein reductase] + 4 H2O + 4 H(+). In terms of biological role, involved in production of the antifungal phytoalexin zealexin A1. The enzyme sequentially oxidizes(S)-beta-macrocarpene via alcohol and aldehyde intermediates to form zealexin A1, a maize phytoalexin that provides biochemical protection against fungal infection. The sequence is that of Zealexin A1 synthase from Zea mays (Maize).